Reading from the N-terminus, the 213-residue chain is MGSYHYTSTSHFFFAGGGEGEYSSYKGTGSTDTHRPTTVRIPVTTPGPERPPDDAAAARIQAAFRGHLVRRHAAAVRGADDEATRLERLLRRQETVDAVRGDERERARFSEALMAVLLRLDAVPGYYPAVREARRAVTRRVVGLQEVFDAVLAAPDAADTCGVPASLDQVLEGIWGESPAAPPPPPPPPPPAAVEVEEEVVRSPCWRRFFGGV.

The IQ domain maps to 53-82 (DDAAAARIQAAFRGHLVRRHAAAVRGADDE). The 78-residue stretch at 75 to 152 (AVRGADDEAT…GLQEVFDAVL (78 aa)) folds into the BAG domain.

Interacts with CAM1-1 under normal conditions. Dissociation of the interaction when calcium-CAM1-1 binding increases under saline-alkaline stress.

Its subcellular location is the mitochondrion. In terms of biological role, co-chaperone that regulates stress responses. Acts as a negative regulator of saline-alkaline stress tolerance. May participate in stress response through regulating the homeostasis of iron, manganese and zinc ions. This chain is BAG family molecular chaperone regulator 6, mitochondrial, found in Oryza sativa subsp. japonica (Rice).